A 152-amino-acid polypeptide reads, in one-letter code: MPKSILLINGPNLNLLGTREPHIYGSTTLADVEAASKAHAESLGATLESFQSNHEGAIVDRIQAARGRVDGIVINPGAYTHTSVAIRDALLGVGIPFIELHVSNVHAREPWRHHSYFSDKAAGIIVGLGVYGYRVAVEHVAVNFKELEKANL.

Y24 acts as the Proton acceptor in catalysis. Substrate contacts are provided by N75, H81, and D88. H101 functions as the Proton donor in the catalytic mechanism. Substrate contacts are provided by residues 102 to 103 (VS) and R112.

This sequence belongs to the type-II 3-dehydroquinase family. As to quaternary structure, homododecamer. Adopts a ring-like structure, composed of an arrangement of two hexameric rings stacked on top of one another.

It catalyses the reaction 3-dehydroquinate = 3-dehydroshikimate + H2O. Its pathway is aromatic compound metabolism; 3,4-dihydroxybenzoate biosynthesis; 3,4-dihydroxybenzoate from 3-dehydroquinate: step 1/2. Functionally, is involved in the catabolism of quinate. Allows the utilization of quinate as carbon source via the beta-ketoadipate pathway. In Aspergillus terreus (strain NIH 2624 / FGSC A1156), this protein is Catabolic 3-dehydroquinase 1.